The chain runs to 180 residues: Adenine phosphoribosyltransferase (180 aa).

Position 2 is an N-acetylserine (Ser2). Residues Ser15 and Ser30 each carry the phosphoserine modification. Tyr60 carries the phosphotyrosine modification. At Ser66 the chain carries Phosphoserine. Lys114 carries the N6-acetyllysine modification. Phosphothreonine is present on Thr135.

Belongs to the purine/pyrimidine phosphoribosyltransferase family. In terms of assembly, homodimer.

The protein resides in the cytoplasm. The enzyme catalyses AMP + diphosphate = 5-phospho-alpha-D-ribose 1-diphosphate + adenine. The protein operates within purine metabolism; AMP biosynthesis via salvage pathway; AMP from adenine: step 1/1. In terms of biological role, catalyzes a salvage reaction resulting in the formation of AMP, that is energically less costly than de novo synthesis. In Mastomys natalensis (African soft-furred rat), this protein is Adenine phosphoribosyltransferase.